A 154-amino-acid polypeptide reads, in one-letter code: 17 kDa surface antigen (154 aa).

Positions 1–19 (MKLLSKIMVIALATSMLQA) are cleaved as a signal peptide. Residue Cys20 is the site of N-palmitoyl cysteine attachment. Cys20 carries the S-diacylglycerol cysteine lipid modification.

Belongs to the rickettsiale 17 kDa surface antigen family.

The protein resides in the cell outer membrane. The protein is 17 kDa surface antigen (omp) of Rickettsia parkeri.